Reading from the N-terminus, the 1149-residue chain is Guanine nucleotide exchange factor DBS (1149 aa).

The 173-residue stretch at 52–224 (AATASDEIMH…DLGGTLDYCH (173 aa)) folds into the CRAL-TRIO domain. A Spectrin repeat occupies 351–456 (LQLRHFEQGF…VTRRRGLLSK (106 aa)). Residues serine 457, serine 462, serine 471, and serine 480 each carry the phosphoserine modification. Positions 503 to 529 (LETGAENKIQELNEIYKEYECILNQDL) form a coiled coil. The disordered stretch occupies residues 555-627 (KKLAAKQTRP…RTSSTGEEEE (73 aa)). The span at 583 to 594 (PGSWRSSENSSS) shows a compositional bias: low complexity. A compositionally biased stretch (basic and acidic residues) spans 607 to 616 (AKSEMSEPRQ). Residue serine 621 is modified to Phosphoserine. Position 622 is a phosphothreonine (threonine 622). A DH domain is found at 632-812 (LRRHVMNELL…LGILKAVNDS (181 aa)). In terms of domain architecture, PH spans 841-950 (TDHKKGHTKV…IRKVLTSQLQ (110 aa)). The interval 956 to 1033 (SQHRALEQSH…EAPEEDGGWS (78 aa)) is disordered. Positions 966 to 978 (SLPLPTPSSTSPT) are enriched in low complexity. A phosphoserine mark is found at serine 1033, serine 1034, serine 1041, and serine 1042. In terms of domain architecture, SH3 spans 1055-1116 (LVPGKYTVVM…PASSLSTLLG (62 aa)).

This sequence belongs to the MCF2 family. As to quaternary structure, interacts with GTP-bound RAC1. Interacts with CDC42. Interacts with RHOA. Interacts with CCPG1, which results in specific inhibition of its exchange activity toward RHOA, but does not affect its activity on CDC42. In terms of tissue distribution, expressed at low levels in several hemopoietic cell lines and in thymus and spleen, and at higher levels in other tissues, particularly in brain.

Its subcellular location is the cytoplasm. The protein localises to the cell membrane. Guanine nucleotide exchange factor that catalyzes guanine nucleotide exchange on RHOA and CDC42, and thereby contributes to the regulation of RHOA and CDC42 signaling pathways. Seems to lack activity with RAC1. Becomes activated and highly tumorigenic by truncation of the N-terminus. The chain is Guanine nucleotide exchange factor DBS (Mcf2l) from Mus musculus (Mouse).